A 232-amino-acid polypeptide reads, in one-letter code: Sugar fermentation stimulation protein homolog (232 aa).

The protein belongs to the SfsA family.

In Moorella thermoacetica (strain ATCC 39073 / JCM 9320), this protein is Sugar fermentation stimulation protein homolog.